The sequence spans 236 residues: Small ribosomal subunit protein uS3 (236 aa).

One can recognise a KH type-2 domain in the interval 39-107; it reads IREVLEKQLK…EVHLNIVEVR (69 aa). The tract at residues 214–236 is disordered; sequence ASERRALEGGDSGGGRSRRDDRG.

It belongs to the universal ribosomal protein uS3 family. As to quaternary structure, part of the 30S ribosomal subunit. Forms a tight complex with proteins S10 and S14.

Binds the lower part of the 30S subunit head. Binds mRNA in the 70S ribosome, positioning it for translation. This Parvibaculum lavamentivorans (strain DS-1 / DSM 13023 / NCIMB 13966) protein is Small ribosomal subunit protein uS3.